A 292-amino-acid polypeptide reads, in one-letter code: Nitrogenase iron protein (292 aa).

An ATP-binding site is contributed by 10–17; it reads GKGGIGKS. Cysteine 98 contacts [4Fe-4S] cluster. The residue at position 101 (arginine 101) is an ADP-ribosylarginine; by dinitrogenase reductase ADP-ribosyltransferase. A [4Fe-4S] cluster-binding site is contributed by cysteine 133.

It belongs to the NifH/BchL/ChlL family. In terms of assembly, homodimer. [4Fe-4S] cluster is required as a cofactor. Post-translationally, the reversible ADP-ribosylation of Arg-101 inactivates the nitrogenase reductase and regulates nitrogenase activity.

It catalyses the reaction N2 + 8 reduced [2Fe-2S]-[ferredoxin] + 16 ATP + 16 H2O = H2 + 8 oxidized [2Fe-2S]-[ferredoxin] + 2 NH4(+) + 16 ADP + 16 phosphate + 6 H(+). Its function is as follows. The key enzymatic reactions in nitrogen fixation are catalyzed by the nitrogenase complex, which has 2 components: the iron protein and the molybdenum-iron protein. This Teredinibacter turnerae (strain ATCC 39867 / T7901) protein is Nitrogenase iron protein.